The sequence spans 271 residues: MLPTVFIVSDGTGITAETFAHSILSQFDQKFRLVRVPFIDSIEKAYDTVRKINDAAQHDGRRPIVFTTLVDGESNEIVKRSNALVLDMFQRFVEPLEQELQLKSSHAMGRVHQNADTEEYKTRIEAINFSLAHDDGQSNRNLADADVILIGVSRSGKTPTSLYLAMQYGVKAANYPLIPEDFERGKLPTPLHPHRDKLFGLSIDPMRLSEIRNERRPGSKYAAPENCRYEINEAEAMMRREGVKWLSSTHKSIEEIATTILQEIKLERQSY.

Position 151 to 158 (151 to 158) interacts with ADP; that stretch reads GVSRSGKT.

This sequence belongs to the pyruvate, phosphate/water dikinase regulatory protein family. PSRP subfamily.

It catalyses the reaction [pyruvate, water dikinase] + ADP = [pyruvate, water dikinase]-phosphate + AMP + H(+). The enzyme catalyses [pyruvate, water dikinase]-phosphate + phosphate + H(+) = [pyruvate, water dikinase] + diphosphate. Bifunctional serine/threonine kinase and phosphorylase involved in the regulation of the phosphoenolpyruvate synthase (PEPS) by catalyzing its phosphorylation/dephosphorylation. In Burkholderia mallei (strain NCTC 10247), this protein is Putative phosphoenolpyruvate synthase regulatory protein.